A 237-amino-acid polypeptide reads, in one-letter code: MERVWVVIPAGGRGQRFGAAQAKQYVLLRDRPVIAHTLAAFLGEPRIAGIQLVLPGEDIATGAWRELLGPMPAPLLPPVVGGGLRADSVRLGLEALLRQGAVPSDWVLVHDAARPCLRREDLLRLLESLANAPQGALLAVPVADTLKRGEDGCSSGTVDREGLWRALTPQAFPLGALLAALEAARAGNRQITDEASAMEAQGWRPRLIPGHGDNIKVTLSDDLMLAAAILAARSEEG.

This sequence belongs to the IspD/TarI cytidylyltransferase family. IspD subfamily.

The catalysed reaction is 2-C-methyl-D-erythritol 4-phosphate + CTP + H(+) = 4-CDP-2-C-methyl-D-erythritol + diphosphate. Its pathway is isoprenoid biosynthesis; isopentenyl diphosphate biosynthesis via DXP pathway; isopentenyl diphosphate from 1-deoxy-D-xylulose 5-phosphate: step 2/6. Functionally, catalyzes the formation of 4-diphosphocytidyl-2-C-methyl-D-erythritol from CTP and 2-C-methyl-D-erythritol 4-phosphate (MEP). In Acidithiobacillus ferrooxidans (strain ATCC 23270 / DSM 14882 / CIP 104768 / NCIMB 8455) (Ferrobacillus ferrooxidans (strain ATCC 23270)), this protein is 2-C-methyl-D-erythritol 4-phosphate cytidylyltransferase.